Consider the following 623-residue polypeptide: UvrABC system protein C (623 aa).

In terms of domain architecture, GIY-YIG spans 21-100; it reads AEPGVYLMRD…IKTHQPPYNV (80 aa). Residues 210–245 form the UVR domain; the sequence is DELIRELQEKMIQAAEQENYEAAARYRDQIRGLEQL.

The protein belongs to the UvrC family. In terms of assembly, interacts with UvrB in an incision complex.

Its subcellular location is the cytoplasm. In terms of biological role, the UvrABC repair system catalyzes the recognition and processing of DNA lesions. UvrC both incises the 5' and 3' sides of the lesion. The N-terminal half is responsible for the 3' incision and the C-terminal half is responsible for the 5' incision. The polypeptide is UvrABC system protein C (Synechococcus sp. (strain JA-2-3B'a(2-13)) (Cyanobacteria bacterium Yellowstone B-Prime)).